Here is a 432-residue protein sequence, read N- to C-terminus: Ciliated left-right organizer protein containing ZP-N domains homolog (432 aa).

Expressed specifically by cells of the ciliated left-right organizer.

The chain is Ciliated left-right organizer protein containing ZP-N domains homolog (ciroz) from Danio rerio (Zebrafish).